The following is a 441-amino-acid chain: Cysteine desulfurase, mitosomal (441 aa).

Pyridoxal 5'-phosphate is bound by residues 107-108, N189, Q217, and 237-239; these read AT and SGH. N6-(pyridoxal phosphate)lysine is present on K240. Position 277 (T277) interacts with pyridoxal 5'-phosphate. Catalysis depends on C367, which acts as the Cysteine persulfide intermediate. C367 provides a ligand contact to [2Fe-2S] cluster.

The protein belongs to the class-V pyridoxal-phosphate-dependent aminotransferase family. NifS/IscS subfamily. In terms of assembly, interacts with ISD11. It depends on pyridoxal 5'-phosphate as a cofactor.

The protein localises to the mitosome. The enzyme catalyses (sulfur carrier)-H + L-cysteine = (sulfur carrier)-SH + L-alanine. Catalyzes the removal of elemental sulfur from cysteine to produce alanine. It supplies the inorganic sulfur for iron-sulfur (Fe-S) clusters in mitosomes. In Trachipleistophora hominis (Microsporidian parasite), this protein is Cysteine desulfurase, mitosomal.